A 649-amino-acid chain; its full sequence is Stress-70 protein, mitochondrial (649 aa).

A mitochondrion-targeting transit peptide spans 1 to 46; sequence MISASRAAAARLVGAAASRGPTAARHKDGWNGLSHEAFRIVSRRDY. The interaction with NFS1 stretch occupies residues 1 to 432; it reads MISASRAAAA…IQGGVLAGDV (432 aa). Residues Thr63 and Asn64 each coordinate ADP. Residues 63-431 form a nucleotide-binding domain (NBD) region; that stretch reads TNSCVAVMEG…AIQGGVLAGD (369 aa). Lys76 bears the N6-acetyllysine mark. Thr87 carries the phosphothreonine modification. N6-acetyllysine; alternate is present on residues Lys135 and Lys138. 2 positions are modified to N6-succinyllysine; alternate: Lys135 and Lys138. N6-acetyllysine is present on Lys143. Lys206 is modified (N6-acetyllysine; alternate). An N6-succinyllysine; alternate modification is found at Lys206. Lys206 carries the N6-malonyllysine; alternate modification. Lys234 and Lys288 each carry N6-acetyllysine. N6-acetyllysine; alternate is present on Lys300. The residue at position 300 (Lys300) is an N6-succinyllysine; alternate. 3 residues coordinate ADP: Glu313, Lys316, and Ser320. An N6-succinyllysine modification is found at Lys368. Gly388 and Arg391 together coordinate ADP. Lys394 carries the N6-succinyllysine modification. Ser408 carries the post-translational modification Phosphoserine. Residues 432–441 form an interdomain linker region; sequence VTDVLLLDVT. N6-acetyllysine; alternate occurs at positions 565, 598, and 638. Lys565, Lys598, and Lys638 each carry N6-succinyllysine; alternate.

It belongs to the heat shock protein 70 family. As to quaternary structure, interacts strongly with the intermediate form of FXN and weakly with its mature form. Interacts with HSCB. Associates with the mitochondrial contact site and cristae organizing system (MICOS) complex, composed of at least MICOS10/MIC10, CHCHD3/MIC19, CHCHD6/MIC25, APOOL/MIC27, IMMT/MIC60, APOO/MIC23/MIC26 and QIL1/MIC13. This complex was also known under the names MINOS or MitOS complex. The MICOS complex associates with mitochondrial outer membrane proteins SAMM50, MTX1, MTX2 and DNAJC11, mitochondrial inner membrane protein TMEM11 and with HSPA9. Interacts with DNLZ, the interaction is required to prevent self-aggregation. Interacts with TESPA1. Interacts with PDPN. Interacts with NFU1, NFS1 and ISCU. Interacts with TP53; the interaction promotes TP53 degradation. Interacts (via SBD domain) with UBXN2A; the interaction with UBXN2A inhibits HSPA9/MOT-2 interaction with and degradation of TP53, thereby promotes TP53 translocation to the nucleus. Interacts with ITPR1 AND VDAC1; this interaction couples ITPR1 to VDAC1. Component of the TIM23 mitochondrial inner membrane pre-sequence translocase complex.

The protein resides in the mitochondrion. It is found in the nucleus. The protein localises to the nucleolus. It localises to the cytoplasm. Its subcellular location is the mitochondrion matrix. It carries out the reaction ATP + H2O = ADP + phosphate + H(+). Its activity is regulated as follows. The chaperone activity is regulated by ATP-induced allosteric coupling of the nucleotide-binding (NBD) and substrate-binding (SBD) domains. ATP binding in the NBD leads to a conformational change in the NBD, which is transferred through the interdomain linker (IDL) to the substrate-binding domain (SBD). This elicits a reduced substrate affinity and a faster substrate exchange rate. Upon hydrolysis of ATP to ADP, the protein undergoes a conformational change that increases its affinity for substrate proteins. It cycles through repeated phases of ATP hydrolysis and nucleotide exchange, facilitating repeated cycles of substrate binding and release. Functions in collaboration with co-chaperones. Functions with the co-chaperone, DNLZ, to maintain solubility and regulate ATP hydrolysis. Nucleotide exchange factors, GRPEL1 and GRPEL2, accelerate nucleotide exchange. Mitochondrial chaperone that plays a key role in mitochondrial protein import, folding, and assembly. Plays an essential role in the protein quality control system, the correct folding of proteins, the re-folding of misfolded proteins, and the targeting of proteins for subsequent degradation. These processes are achieved through cycles of ATP binding, ATP hydrolysis, and ADP release, mediated by co-chaperones. In mitochondria, it associates with the TIM (translocase of the inner membrane) protein complex to assist in the import and folding of mitochondrial proteins. Plays an important role in mitochondrial iron-sulfur cluster (ISC) biogenesis, interacts with and stabilizes ISC cluster assembly proteins FXN, NFU1, NFS1 and ISCU. Regulates erythropoiesis via stabilization of ISC assembly. Regulates mitochondrial calcium-dependent apoptosis by coupling two calcium channels, ITPR1 and VDAC1, at the mitochondria-associated endoplasmic reticulum (ER) membrane to facilitate calcium transport from the ER lumen to the mitochondria intermembrane space, providing calcium for the downstream calcium channel MCU, which releases it into the mitochondrial matrix. Although primarily located in the mitochondria, it is also found in other cellular compartments. In the cytosol, it associates with proteins involved in signaling, apoptosis, or senescence. It may play a role in cell cycle regulation via its interaction with and promotion of degradation of TP53. May play a role in the control of cell proliferation and cellular aging. Protects against reactive oxygen species (ROS). Extracellular HSPA9 plays a cytoprotective role by preventing cell lysis following immune attack by the membrane attack complex by disrupting formation of the complex. In Canis lupus familiaris (Dog), this protein is Stress-70 protein, mitochondrial.